The following is an 825-amino-acid chain: MAFESWPAGGVRPVEELDVRSFLMEENSTAERCYRSHSRSSVLQGLPFGGVPTVLAINVVLWLILLLIFSCLRKAAWDYGRLALLMKNDSLTSLFYGEQSEKEKTPSDSSPSDSETKDMGFCSWLTSLYHMKDEEIRSKCGIDAVTYLSFQRHIILLMMVVCLLSLTIILPVNLSGNLLGDNPENFGRTTVVNVPAQNIFLWLHSIFALLYFVITVLCMAHHSSRLEYREDEKVARTLMITSIPREISDPGLITKHLHEAYPSCTVTDIHFCFNVQKLMKLDSERRKAMKGRLYFTTKAQKNGRIMIKTHPCAQIFCCDICGFEKVDAEQYYSELEEKLTDEFNAEKNWISMKRLGIAFVTFRDERMTAVIVKDYSRARCRHKPQQSSITTVVRSHQWDVSYAPAPNDIIWENLSVCGPRWWLRCILLNILLFLLLFFLTTPAIIVNTMDKFNVTRPVESLRNPVITQFFPTLLLWAFSILLPFIVYYSSFFEYHWTRSGENQVTMHKCFLLLVFMVIILPSLGLSSLNLFFRWLFDVRFLDETDVKFQCVFLPDNGAFFVNYVITSSLIGTAMELLRIPALLVYSLRLCFAKSKAECIHVKISQAYEFQFGLEYAWTMCIFSVSMTYSITCPVIVPFGLLYLVLKHMVDRYNIYYAYTPTKLNQRIHAAAISQVVVAPILCMFWLLFFSVLRLGPVQPITLFTFITLLCSIAFSCFGFCMKKLRADRSTSYQMSDQTTEGGFSDAERSTISTTATANLFIASVLLEPELGLTPMPSPAHQSYGTMVNSQSSVRDAEEDEEKDLEETLETELKDDLLMDSPVAFQ.

The Extracellular segment spans residues 1 to 50; the sequence is MAFESWPAGGVRPVEELDVRSFLMEENSTAERCYRSHSRSSVLQGLPFGG. Residues 51–75 traverse the membrane as a helical segment; it reads VPTVLAINVVLWLILLLIFSCLRKA. Over 76-141 the chain is Cytoplasmic; that stretch reads AWDYGRLALL…KDEEIRSKCG (66 aa). The tract at residues 98 to 117 is disordered; it reads EQSEKEKTPSDSSPSDSETK. The chain crosses the membrane as a helical span at residues 142–174; it reads IDAVTYLSFQRHIILLMMVVCLLSLTIILPVNL. At 175–198 the chain is on the extracellular side; the sequence is SGNLLGDNPENFGRTTVVNVPAQN. Residues 199–223 form a helical membrane-spanning segment; sequence IFLWLHSIFALLYFVITVLCMAHHS. The Cytoplasmic segment spans residues 224–418; that stretch reads SRLEYREDEK…IIWENLSVCG (195 aa). Residues 419-448 form a helical membrane-spanning segment; that stretch reads PRWWLRCILLNILLFLLLFFLTTPAIIVNT. The Extracellular segment spans residues 449-463; that stretch reads MDKFNVTRPVESLRN. The chain crosses the membrane as a helical span at residues 464–493; it reads PVITQFFPTLLLWAFSILLPFIVYYSSFFE. Residues 494 to 497 are Cytoplasmic-facing; that stretch reads YHWT. Residues 498-534 form a helical membrane-spanning segment; the sequence is RSGENQVTMHKCFLLLVFMVIILPSLGLSSLNLFFRW. Residues 535 to 557 are Extracellular-facing; it reads LFDVRFLDETDVKFQCVFLPDNG. Residues 558-590 form a helical membrane-spanning segment; it reads AFFVNYVITSSLIGTAMELLRIPALLVYSLRLC. Residues 591–610 lie on the Cytoplasmic side of the membrane; sequence FAKSKAECIHVKISQAYEFQ. Residues 611–629 form a helical membrane-spanning segment; sequence FGLEYAWTMCIFSVSMTYS. The Extracellular segment spans residues 630 to 632; sequence ITC. A helical transmembrane segment spans residues 633-657; that stretch reads PVIVPFGLLYLVLKHMVDRYNIYYA. Residues 658–664 are Cytoplasmic-facing; sequence YTPTKLN. Residues 665 to 693 form a helical membrane-spanning segment; sequence QRIHAAAISQVVVAPILCMFWLLFFSVLR. At 694 to 698 the chain is on the extracellular side; the sequence is LGPVQ. The chain crosses the membrane as a helical span at residues 699–719; the sequence is PITLFTFITLLCSIAFSCFGF. Over 720–825 the chain is Cytoplasmic; sequence CMKKLRADRS…LLMDSPVAFQ (106 aa). Positions 777–825 are disordered; it reads SPAHQSYGTMVNSQSSVRDAEEDEEKDLEETLETELKDDLLMDSPVAFQ. Positions 779 to 793 are enriched in polar residues; sequence AHQSYGTMVNSQSSV. The span at 796–809 shows a compositional bias: acidic residues; it reads AEEDEEKDLEETLE.

Belongs to the CSC1 (TC 1.A.17) family. In terms of assembly, monomer.

The protein resides in the endoplasmic reticulum membrane. The protein localises to the cell membrane. The enzyme catalyses Ca(2+)(in) = Ca(2+)(out). Acts as an osmosensitive cation channel preferentially activated upon hypotonic stress. In contrast to tmem63b, does not show phospholipid scramblase activity. Required for the functional integrity of the kidney glomerular filtration barrier. The polypeptide is Osmosensitive cation channel TMEM63C (tmem63c) (Danio rerio (Zebrafish)).